Consider the following 481-residue polypeptide: Bifunctional protein GlmU (481 aa).

The segment at 1–235 (MTHKERPLDV…PDEVMGANDR (235 aa)) is pyrophosphorylase. UDP-N-acetyl-alpha-D-glucosamine-binding positions include 13-16 (LAAG), Lys-27, Gln-78, 83-84 (GT), 107-109 (YGD), Gly-146, Glu-161, Asn-176, and Asn-233. Asp-109 contacts Mg(2+). Residue Asn-233 coordinates Mg(2+). The tract at residues 236-256 (VQLAQAAAVLRRRINTAHMQA) is linker. Residues 257-481 (GVTLQDPSTI…PWLAGWLERQ (225 aa)) form an N-acetyltransferase region. Residues Arg-339 and Lys-357 each coordinate UDP-N-acetyl-alpha-D-glucosamine. Catalysis depends on His-369, which acts as the Proton acceptor. Tyr-372 and Asn-383 together coordinate UDP-N-acetyl-alpha-D-glucosamine. Acetyl-CoA contacts are provided by Ala-386, Ser-411, Ala-429, and Arg-446.

The protein in the N-terminal section; belongs to the N-acetylglucosamine-1-phosphate uridyltransferase family. It in the C-terminal section; belongs to the transferase hexapeptide repeat family. In terms of assembly, homotrimer. Mg(2+) serves as cofactor.

Its subcellular location is the cytoplasm. The enzyme catalyses alpha-D-glucosamine 1-phosphate + acetyl-CoA = N-acetyl-alpha-D-glucosamine 1-phosphate + CoA + H(+). It catalyses the reaction N-acetyl-alpha-D-glucosamine 1-phosphate + UTP + H(+) = UDP-N-acetyl-alpha-D-glucosamine + diphosphate. Its pathway is nucleotide-sugar biosynthesis; UDP-N-acetyl-alpha-D-glucosamine biosynthesis; N-acetyl-alpha-D-glucosamine 1-phosphate from alpha-D-glucosamine 6-phosphate (route II): step 2/2. It functions in the pathway nucleotide-sugar biosynthesis; UDP-N-acetyl-alpha-D-glucosamine biosynthesis; UDP-N-acetyl-alpha-D-glucosamine from N-acetyl-alpha-D-glucosamine 1-phosphate: step 1/1. It participates in bacterial outer membrane biogenesis; LPS lipid A biosynthesis. Catalyzes the last two sequential reactions in the de novo biosynthetic pathway for UDP-N-acetylglucosamine (UDP-GlcNAc). The C-terminal domain catalyzes the transfer of acetyl group from acetyl coenzyme A to glucosamine-1-phosphate (GlcN-1-P) to produce N-acetylglucosamine-1-phosphate (GlcNAc-1-P), which is converted into UDP-GlcNAc by the transfer of uridine 5-monophosphate (from uridine 5-triphosphate), a reaction catalyzed by the N-terminal domain. The sequence is that of Bifunctional protein GlmU from Deinococcus geothermalis (strain DSM 11300 / CIP 105573 / AG-3a).